The following is a 218-amino-acid chain: Adenylate kinase (218 aa).

10–15 contacts ATP; the sequence is GAGKGT. Residues 30–59 form an NMP region; the sequence is STGDMIRETIKSGSVLGQELKKVLDAGELV. AMP contacts are provided by residues Thr31, Arg36, 57 to 59, and Gln92; that span reads ELV. The segment at 122–159 is LID; sequence GRRIHPASGRTYHTKFNPPKVADKDDVTGEPLITRTDD. ATP is bound by residues Arg123 and 132–133; that span reads TY. Residues Arg156 and Arg167 each coordinate AMP. Gln202 provides a ligand contact to ATP.

The protein belongs to the adenylate kinase family. Monomer.

It localises to the cytoplasm. It carries out the reaction AMP + ATP = 2 ADP. It functions in the pathway purine metabolism; AMP biosynthesis via salvage pathway; AMP from ADP: step 1/1. In terms of biological role, catalyzes the reversible transfer of the terminal phosphate group between ATP and AMP. Plays an important role in cellular energy homeostasis and in adenine nucleotide metabolism. The protein is Adenylate kinase of Francisella tularensis subsp. holarctica (strain LVS).